The sequence spans 94 residues: Integration host factor subunit beta (94 aa).

Belongs to the bacterial histone-like protein family. Heterodimer of an alpha and a beta chain.

Its function is as follows. This protein is one of the two subunits of integration host factor, a specific DNA-binding protein that functions in genetic recombination as well as in transcriptional and translational control. The sequence is that of Integration host factor subunit beta from Dechloromonas aromatica (strain RCB).